We begin with the raw amino-acid sequence, 591 residues long: L-fucose isomerase (591 aa).

Active-site proton acceptor residues include Glu-337 and Asp-361. Mn(2+) is bound by residues Glu-337, Asp-361, and His-528.

Belongs to the L-fucose isomerase family. Homohexamer. Requires Mn(2+) as cofactor.

It localises to the cytoplasm. It carries out the reaction L-fucose = L-fuculose. It participates in carbohydrate degradation; L-fucose degradation; L-lactaldehyde and glycerone phosphate from L-fucose: step 1/3. Converts the aldose L-fucose into the corresponding ketose L-fuculose. The protein is L-fucose isomerase of Escherichia coli (strain SE11).